The sequence spans 343 residues: Zinc finger CCCH domain-containing protein 39 (343 aa).

Residues 114–147 adopt a coiled-coil conformation; the sequence is LSHLADAADEAAALRQENAELRVANNDLACRIAK. 2 consecutive C3H1-type zinc fingers follow at residues 268 to 296 and 306 to 334; these read MFKT…HGVA and RYKT…HSIT.

The chain is Zinc finger CCCH domain-containing protein 39 from Oryza sativa subsp. japonica (Rice).